A 799-amino-acid chain; its full sequence is ATP-dependent DNA helicase Hel308 (799 aa).

Residues glutamine 29 and 47-54 contribute to the ATP site; that span reads IPTASGKT. A Helicase ATP-binding domain is found at 34 to 200; the sequence is EAGVTEGENL…WLDAGLVDSD (167 aa). The DEAH box signature appears at 145–148; it reads DEVH. Residues 234 to 435 enclose the Helicase C-terminal domain; it reads QTAAIVRDTL…EPALRTHILA (202 aa). Disordered regions lie at residues 522 to 566 and 750 to 799; these read RGAS…DRDP and NVLE…LGDF. Residues 553–566 show a composition bias toward acidic residues; sequence LAEDADESDADRDP.

Belongs to the helicase family. Hel308 subfamily. In terms of assembly, monomer.

It carries out the reaction Couples ATP hydrolysis with the unwinding of duplex DNA by translocating in the 3'-5' direction.. The catalysed reaction is ATP + H2O = ADP + phosphate + H(+). Functionally, DNA-dependent ATPase and 3'-5' DNA helicase that may be involved in repair of stalled replication forks. The protein is ATP-dependent DNA helicase Hel308 of Haloarcula marismortui (strain ATCC 43049 / DSM 3752 / JCM 8966 / VKM B-1809) (Halobacterium marismortui).